The chain runs to 436 residues: Probable cinnamyl alcohol dehydrogenase 8B (436 aa).

Position 120 (cysteine 120) interacts with Zn(2+). Threonine 122 lines the NADP(+) pocket. Residues histidine 142, glutamate 143, cysteine 173, cysteine 176, cysteine 179, cysteine 187, and cysteine 236 each contribute to the Zn(2+) site. NADP(+) is bound by residues threonine 240, 261-266 (GLGGLG), 284-289 (STSPGK), threonine 324, glycine 348, and 371-373 (NCV).

This sequence belongs to the zinc-containing alcohol dehydrogenase family. Homodimer. Zn(2+) is required as a cofactor.

It carries out the reaction (E)-cinnamyl alcohol + NADP(+) = (E)-cinnamaldehyde + NADPH + H(+). The catalysed reaction is (E)-coniferol + NADP(+) = (E)-coniferaldehyde + NADPH + H(+). The enzyme catalyses (E)-sinapyl alcohol + NADP(+) = (E)-sinapaldehyde + NADPH + H(+). It catalyses the reaction (E)-4-coumaroyl alcohol + NADP(+) = (E)-4-coumaraldehyde + NADPH + H(+). It carries out the reaction (E)-caffeyl alcohol + NADP(+) = (E)-caffeyl aldehyde + NADPH + H(+). The protein operates within aromatic compound metabolism; phenylpropanoid biosynthesis. Functionally, involved in lignin biosynthesis. Catalyzes the final step specific for the production of lignin monomers. Catalyzes the NADPH-dependent reduction of coniferaldehyde, 5-hydroxyconiferaldehyde, sinapaldehyde, 4-coumaraldehyde and caffeyl aldehyde to their respective alcohols. This chain is Probable cinnamyl alcohol dehydrogenase 8B, found in Oryza sativa subsp. japonica (Rice).